The chain runs to 151 residues: Small ribosomal subunit protein uS11 (151 aa).

The interval 131–151 is disordered; that stretch reads DVTPVPSDSTRRKGGRRGRRL. The span at 142–151 shows a compositional bias: basic residues; it reads RKGGRRGRRL.

The protein belongs to the universal ribosomal protein uS11 family.

The protein is Small ribosomal subunit protein uS11 of Bombyx mori (Silk moth).